A 204-amino-acid polypeptide reads, in one-letter code: Holliday junction branch migration complex subunit RuvA (204 aa).

The domain I stretch occupies residues 1-64; it reads MIGKLKGTLE…EEAIRLFGFA (64 aa). The segment at 65–143 is domain II; the sequence is TRAEQEWFCM…PFEQAVKTVS (79 aa). Positions 144–154 are flexible linker; that stretch reads VPQREITHQPA. The segment at 154–204 is domain III; that stretch reads AHDALSALMKLGFEREQAARALALAMNALEGEAVSSALLIRHSLKLLSSPT.

The protein belongs to the RuvA family. Homotetramer. Forms an RuvA(8)-RuvB(12)-Holliday junction (HJ) complex. HJ DNA is sandwiched between 2 RuvA tetramers; dsDNA enters through RuvA and exits via RuvB. An RuvB hexamer assembles on each DNA strand where it exits the tetramer. Each RuvB hexamer is contacted by two RuvA subunits (via domain III) on 2 adjacent RuvB subunits; this complex drives branch migration. In the full resolvosome a probable DNA-RuvA(4)-RuvB(12)-RuvC(2) complex forms which resolves the HJ.

The protein resides in the cytoplasm. The RuvA-RuvB-RuvC complex processes Holliday junction (HJ) DNA during genetic recombination and DNA repair, while the RuvA-RuvB complex plays an important role in the rescue of blocked DNA replication forks via replication fork reversal (RFR). RuvA specifically binds to HJ cruciform DNA, conferring on it an open structure. The RuvB hexamer acts as an ATP-dependent pump, pulling dsDNA into and through the RuvAB complex. HJ branch migration allows RuvC to scan DNA until it finds its consensus sequence, where it cleaves and resolves the cruciform DNA. The sequence is that of Holliday junction branch migration complex subunit RuvA from Bartonella tribocorum (strain CIP 105476 / IBS 506).